The primary structure comprises 610 residues: Probable galacturonosyltransferase 5 (610 aa).

Over 1-6 (MNQVRR) the chain is Cytoplasmic. Residues 7–27 (WQRILILSLLLLSVLAPIVFV) traverse the membrane as a helical; Signal-anchor for type II membrane protein segment. The Lumenal segment spans residues 28–610 (SNRLKSITSV…PHLQRCNIHD (583 aa)). Residues 86-101 (LSNSSDKSNDTVQSNE) show a composition bias toward polar residues. The segment at 86-170 (LSNSSDKSND…KNTRVQLERA (85 aa)) is disordered. Residues N88 and N94 are each glycosylated (N-linked (GlcNAc...) asparagine). Positions 110-123 (EVDKGNNHKPKEEQ) are enriched in basic and acidic residues. Positions 124 to 135 (AVSQKTTVSSNA) are enriched in polar residues. The segment covering 139–170 (ISARDIQLNHKTEFRPPSSKSEKNTRVQLERA) has biased composition (basic and acidic residues). Residues N196, N338, N401, and N475 are each glycosylated (N-linked (GlcNAc...) asparagine).

Belongs to the glycosyltransferase 8 family. As to expression, expressed in roots, inflorescences, siliques, leaves and stems.

Its subcellular location is the golgi apparatus membrane. It participates in glycan metabolism; pectin biosynthesis. Functionally, may be involved in pectin and/or xylans biosynthesis in cell walls. The sequence is that of Probable galacturonosyltransferase 5 (GAUT5) from Arabidopsis thaliana (Mouse-ear cress).